The chain runs to 137 residues: Large ribosomal subunit protein uL16 (137 aa).

Residues Met-1–Asn-17 show a composition bias toward basic residues. Positions Met-1–Gln-22 are disordered.

This sequence belongs to the universal ribosomal protein uL16 family. In terms of assembly, part of the 50S ribosomal subunit.

Its function is as follows. Binds 23S rRNA and is also seen to make contacts with the A and possibly P site tRNAs. This is Large ribosomal subunit protein uL16 from Teredinibacter turnerae (strain ATCC 39867 / T7901).